The chain runs to 773 residues: Histone-lysine N-methyltransferase mes-2 (773 aa).

A compositionally biased stretch (polar residues) spans 1 to 13; sequence MSNSEPSTSTPSG. Residues 1-33 form a disordered region; it reads MSNSEPSTSTPSGKTKKRGKKCETSMGKSKKSK. The segment at 1–194 is interaction with mes-6; it reads MSNSEPSTST…TPDQLRLTHM (194 aa). Residues 505–614 enclose the CXC domain; sequence IREDDMRDSQ…SNIIKCRNFG (110 aa). The SET domain occupies 616-737; that stretch reads TRMIQKRTYC…ISEELTFDYS (122 aa). Residues 749–773 are disordered; it reads VQTKERSEKPSRPKSQKLSKPMTSE. Positions 750–759 are enriched in basic and acidic residues; the sequence is QTKERSEKPS.

This sequence belongs to the class V-like SAM-binding methyltransferase superfamily. Histone-lysine methyltransferase family. EZ subfamily. Interacts directly with mes-6 via its N-terminal domain. Forms a heterotrimeric complex with mes-3 and mes-6. Does not interact with mes-4. In adults, it is predominantly expressed in the germline, and weakly expressed in intestinal cells. Expressed in the hypoderm.

It localises to the nucleus. The enzyme catalyses L-lysyl(27)-[histone H3] + 3 S-adenosyl-L-methionine = N(6),N(6),N(6)-trimethyl-L-lysyl(27)-[histone H3] + 3 S-adenosyl-L-homocysteine + 3 H(+). In terms of biological role, polycomb group (PcG) protein. Catalytic subunit of a the mes-2/mes-3/mes-6 complex, which methylates 'Lys-27' of histone H3, leading to transcriptional repression of the affected target genes. PcG proteins act by forming multiprotein complexes, which are required to maintain the transcriptionally repressive state of homeotic genes throughout development. In association with the nfya-1-NF-Y complex, may play a role in repressing the expression of the homeobox protein egl-5 in tissues such as the head. PcG proteins are not required to initiate repression, but to maintain it during later stages of development. The mes-2/mes-3/mes-6 complex may participate in the global inactivation of the X chromosomes in germline cells. This complex is required to exclude mes-4 from the inactivated X-chromosomes in germline cells. Required for small-RNA-induced H3K27 trimethylation. Involved in the negative regulation of lifespan in a germline-independent fashion. This chain is Histone-lysine N-methyltransferase mes-2, found in Caenorhabditis elegans.